Consider the following 152-residue polypeptide: Urease accessory protein UreE (152 aa).

The protein belongs to the UreE family.

The protein resides in the cytoplasm. Involved in urease metallocenter assembly. Binds nickel. Probably functions as a nickel donor during metallocenter assembly. The sequence is that of Urease accessory protein UreE from Psychromonas ingrahamii (strain DSM 17664 / CCUG 51855 / 37).